Here is a 1098-residue protein sequence, read N- to C-terminus: Ubiquitin carboxyl-terminal hydrolase 36 (1098 aa).

Positions 72–86 (RHRSGDELQARKPGT) are enriched in basic and acidic residues. Residues 72 to 97 (RHRSGDELQARKPGTERVSGSGGDGV) are disordered. The 302-residue stretch at 122 to 423 (AGLHNLGNTC…QAYVLFYLRI (302 aa)) folds into the USP domain. Cysteine 131 (nucleophile) is an active-site residue. Catalysis depends on histidine 382, which acts as the Proton acceptor. Disordered regions lie at residues 428-464 (KSPE…VPSP) and 483-574 (EVGV…RDTI). Residues serine 429, serine 463, serine 547, and serine 578 each carry the phosphoserine modification. Residues 540–558 (PLQSLTTSPTTSQGSPGTG) show a composition bias toward low complexity. The disordered stretch occupies residues 589 to 640 (GHRLKGEGSGVDLEKGDSSSSSPEHSASSDPAKAPQTAESRAAHACDSQGTN). Over residues 606–617 (SSSSSPEHSASS) the composition is skewed to low complexity. The residue at position 663 (serine 663) is a Phosphoserine. Disordered regions lie at residues 664 to 710 (PALS…SPSA) and 722 to 973 (HPVV…ALSV). Positions 665–677 (ALSSTTTEPTSLM) are enriched in polar residues. Phosphoserine is present on serine 678. A compositionally biased stretch (low complexity) spans 683 to 692 (KKLALSAKKA). A Phosphoserine modification is found at serine 709. Over residues 746 to 763 (HPHSASLSSSSAKPLGTS) the composition is skewed to low complexity. Residues 853-878 (GQFQDQSWSSGSQKEEGTQPQVNGHQ) are compositionally biased toward polar residues. Residues 889 to 898 (SSRKRRKRKR) show a composition bias toward basic residues. Residues 901–917 (GLSQEATPSQDLIQHSC) are compositionally biased toward polar residues. Basic and acidic residues predominate over residues 921–932 (DHSEPEARTELQ). Residues 933 to 943 (KKKKKKRRKRK) are compositionally biased toward basic residues. The segment covering 944–960 (PEPQQDEESKHPGDQRS) has biased composition (basic and acidic residues).

Belongs to the peptidase C19 family. Interacts with isoform 3 of FBXW7; the interaction inhibits MYC degradation induced by SCF(FBW7) complex. Interacts with NTRK1; USP36 does not deubiquitinate NTRK1. Interacts with NEDD4L (via domains WW1, 3 and 4); the interaction inhibits ubiquitination of, at least, NTRK1, KCNQ2 and KCNQ3 by NEDD4L. Interacts (via C-terminus) with EXOSC10 (via C-terminus); the interaction is facilitated by the association with RNA and promotes sumoylation of EXOSC10. Post-translationally, polyubiquitinated by NEDD4L, no effect on USP36 protein levels. Both proteins interact with and regulate each other's ubiquitination levels.

The protein localises to the nucleus. It is found in the nucleolus. It localises to the cytoplasm. The enzyme catalyses Thiol-dependent hydrolysis of ester, thioester, amide, peptide and isopeptide bonds formed by the C-terminal Gly of ubiquitin (a 76-residue protein attached to proteins as an intracellular targeting signal).. Its function is as follows. Deubiquitinase essential for the regulation of nucleolar structure and function. Required for cell and organism viability. Plays an important role in ribosomal RNA processing and protein synthesis, which is mediated, at least in part, through deubiquitination of DHX33, NPM1 and FBL, regulating their protein stability. Functions as a transcriptional repressor by deubiquiting histone H2B at the promoters of genes critical for cellular differentiation, such as CDKN1A, thereby preventing histone H3 'Lys-4' trimethylation (H3K4). Specifically deubiquitinates MYC in the nucleolus, leading to prevent MYC degradation by the proteasome: acts by specifically interacting with isoform 3 of FBXW7 (FBW7gamma) in the nucleolus and counteracting ubiquitination of MYC by the SCF(FBW7) complex. In contrast, it does not interact with isoform 1 of FBXW7 (FBW7alpha) in the nucleoplasm. Interacts to and regulates the actions of E3 ubiquitin-protein ligase NEDD4L over substrates such as NTRK1, KCNQ2 and KCNQ3, affecting their expression an functions. Deubiquitinates SOD2, regulates SOD2 protein stability. Deubiquitinase activity is required to control selective autophagy activation by ubiquitinated proteins. Promotes CEP63 stabilization through 'Lys-48'-linked deubiquitination leading to increased stability. Acts as a SUMO ligase to promote EXOSC10 sumoylation critical for the nucleolar RNA exosome function in rRNA processing. Binds to pre-rRNAs. The sequence is that of Ubiquitin carboxyl-terminal hydrolase 36 (Usp36) from Mus musculus (Mouse).